The chain runs to 215 residues: MGLAGVCVLRRSAGYILGGAAGQSVAATAAARRRSEGGWASGGVRSFSRAAAAMAPIKVGDAIPAVEVFEGEPGNKVNLAELFKGKKGVLFGVPGAFTPGCSKTHLPGFVEQAEALKAKGVQVLACLSVNDAFVTGEWGRAHKVEGKVRLLADPTGAFGKETDLLLDDSLVSIFGNRRLKRFSMVVQDGIVKALNVEPDGTGLTCSLAPSIISQL.

The transit peptide at 1–53 directs the protein to the mitochondrion; the sequence is MGLAGVCVLRRSAGYILGGAAGQSVAATAAARRRSEGGWASGGVRSFSRAAAA. The Thioredoxin domain maps to 57–215; it reads IKVGDAIPAV…SLAPSIISQL (159 aa). Position 76 is an N6-acetyllysine (lysine 76). At lysine 84 the chain carries N6-acetyllysine; alternate. N6-succinyllysine; alternate is present on lysine 84. Cysteine 101 functions as the Cysteine sulfenic acid (-SOH) intermediate in the catalytic mechanism. Cysteine 101 is lipidated: S-palmitoyl cysteine. Cysteine 101 and cysteine 205 are joined by a disulfide. Lysine 117 is subject to N6-succinyllysine. Phosphoserine is present on residues serine 172 and serine 183. The Microbody targeting signal signature appears at 213-215; it reads SQL.

This sequence belongs to the peroxiredoxin family. Prx5 subfamily. In terms of assembly, monomer. S-palmitoylated. Palmitoylation occurs on the active site, inhibiting its reactivity; therefore PRDX5 palmitoylation status determines its antioxidant capacity. In terms of processing, S-palmitoylated. Depalmitoylated by ABHD10.

Its subcellular location is the mitochondrion. The protein localises to the cytoplasm. It localises to the peroxisome matrix. The enzyme catalyses a hydroperoxide + [thioredoxin]-dithiol = an alcohol + [thioredoxin]-disulfide + H2O. Functionally, thiol-specific peroxidase that catalyzes the reduction of hydrogen peroxide and organic hydroperoxides to water and alcohols, respectively. Plays a role in cell protection against oxidative stress by detoxifying peroxides and as sensor of hydrogen peroxide-mediated signaling events. The chain is Peroxiredoxin-5, mitochondrial (PRDX5) from Papio hamadryas (Hamadryas baboon).